Here is a 574-residue protein sequence, read N- to C-terminus: Phospholipase B-like protein A (574 aa).

Positions 1–20 are cleaved as a signal peptide; that stretch reads MRVIRSLLLLTIAIIGSVLS. N-linked (GlcNAc...) asparagine glycans are attached at residues Asn159, Asn195, and Asn415.

It belongs to the phospholipase B-like family.

Its subcellular location is the secreted. Phospholipase that removes both fatty-acid chains from phosphatidylcholine and produces the water-soluble glycerophosphorylcholine. In addition to phosphatidylcholine deacylation, it also hydrolyzes phosphatidylinositol and phosphatidylethanolamine. The chain is Phospholipase B-like protein A (plbA) from Dictyostelium discoideum (Social amoeba).